Consider the following 287-residue polypeptide: Centromere protein P (287 aa).

The stretch at Met1 to Phe37 forms a coiled coil.

It belongs to the CENP-P/CTF19 family. Component of the CENPA-HI complex, at least composed of CENPH, CENPI, CENPK, CENPL, CENPM, CENPO and CENPP.

The protein localises to the nucleus. It localises to the chromosome. It is found in the centromere. Component of the CENPA-HI complex, a centromeric complex involved in assembly of kinetochore proteins, mitotic progression and chromosome segregation. This Gallus gallus (Chicken) protein is Centromere protein P (CENPP).